A 194-amino-acid polypeptide reads, in one-letter code: Imidazoleglycerol-phosphate dehydratase (194 aa).

This sequence belongs to the imidazoleglycerol-phosphate dehydratase family.

It is found in the cytoplasm. The catalysed reaction is D-erythro-1-(imidazol-4-yl)glycerol 3-phosphate = 3-(imidazol-4-yl)-2-oxopropyl phosphate + H2O. The protein operates within amino-acid biosynthesis; L-histidine biosynthesis; L-histidine from 5-phospho-alpha-D-ribose 1-diphosphate: step 6/9. The sequence is that of Imidazoleglycerol-phosphate dehydratase from Streptococcus sanguinis (strain SK36).